We begin with the raw amino-acid sequence, 147 residues long: Large ribosomal subunit protein bL9 (147 aa).

This sequence belongs to the bacterial ribosomal protein bL9 family.

Binds to the 23S rRNA. This Campylobacter jejuni subsp. jejuni serotype O:2 (strain ATCC 700819 / NCTC 11168) protein is Large ribosomal subunit protein bL9.